The following is a 194-amino-acid chain: MAPRLVLASQSPRRRELLAQLGLALEIRPADTDERVLPGEPPRDYVLRVAREKARAVPGDLVLAADTAVVLGGEVLGKPRDADDARRMLRALSGTRHEVLTAVCVRRNASALGVELDAVVATEVAFARLGDAEIDWYVGTGEPLDKAGAYAIQGSGGAFVEEVRGSVSNVVGLPLAETAALLRRAGFPLPWERP.

The active-site Proton acceptor is the Asp-66.

It belongs to the Maf family. YhdE subfamily. A divalent metal cation serves as cofactor.

Its subcellular location is the cytoplasm. The catalysed reaction is dTTP + H2O = dTMP + diphosphate + H(+). It carries out the reaction UTP + H2O = UMP + diphosphate + H(+). Its function is as follows. Nucleoside triphosphate pyrophosphatase that hydrolyzes dTTP and UTP. May have a dual role in cell division arrest and in preventing the incorporation of modified nucleotides into cellular nucleic acids. This is dTTP/UTP pyrophosphatase from Anaeromyxobacter dehalogenans (strain 2CP-1 / ATCC BAA-258).